The following is a 283-amino-acid chain: SNAP25 homologous protein SNAP32 (283 aa).

Disordered stretches follow at residues 1–64 (MSGR…AAAR) and 192–212 (LGLS…EPTS). Polar residues predominate over residues 198 to 212 (PPQSNARQFHSEPTS). A t-SNARE coiled-coil homology domain is found at 218–280 (EMEKAKQDDG…KGANTRARRL (63 aa)).

The protein belongs to the SNAP-25 family. Interacts with SYP121. In terms of tissue distribution, expressed in roots, culms and leaves.

The protein resides in the membrane. Functionally, t-SNARE involved in diverse vesicle trafficking and membrane fusion processes. May be involved in resistance to the rice blast fungus Magnaporthe oryzae. May contribute to host resistance to rice blast through interaction with SYP121. This is SNAP25 homologous protein SNAP32 from Oryza sativa subsp. japonica (Rice).